The following is a 102-amino-acid chain: uncharacterized protein (102 aa).

Residues 48–102 form the HTH cro/C1-type domain; it reads LNDKRKSLGIELSMLELQTGVSISTLNRLFQDPSQVRFTTVFLVAQTLGVSLCAI. Positions 59 to 78 form a DNA-binding region, H-T-H motif; it reads LSMLELQTGVSISTLNRLFQ.

This is an uncharacterized protein from Haemophilus influenzae (strain ATCC 51907 / DSM 11121 / KW20 / Rd).